Consider the following 230-residue polypeptide: Large ribosomal subunit protein uL1 (230 aa).

The protein belongs to the universal ribosomal protein uL1 family. Part of the 50S ribosomal subunit.

Binds directly to 23S rRNA. The L1 stalk is quite mobile in the ribosome, and is involved in E site tRNA release. Functionally, protein L1 is also a translational repressor protein, it controls the translation of the L11 operon by binding to its mRNA. This chain is Large ribosomal subunit protein uL1, found in Oenococcus oeni (strain ATCC BAA-331 / PSU-1).